A 227-amino-acid chain; its full sequence is Cytochrome c oxidase subunit 2 (227 aa).

The Mitochondrial intermembrane portion of the chain corresponds to M1–S14. Residues P15–M45 form a helical membrane-spanning segment. Residues L46 to Q59 lie on the Mitochondrial matrix side of the membrane. The chain crosses the membrane as a helical span at residues M60 to T87. Residues D88–S227 are Mitochondrial intermembrane-facing. 6 residues coordinate Cu cation: H161, C196, E198, C200, H204, and M207. E198 contacts Mg(2+).

It belongs to the cytochrome c oxidase subunit 2 family. Component of the cytochrome c oxidase (complex IV, CIV), a multisubunit enzyme composed of 14 subunits. The complex is composed of a catalytic core of 3 subunits MT-CO1, MT-CO2 and MT-CO3, encoded in the mitochondrial DNA, and 11 supernumerary subunits COX4I, COX5A, COX5B, COX6A, COX6B, COX6C, COX7A, COX7B, COX7C, COX8 and NDUFA4, which are encoded in the nuclear genome. The complex exists as a monomer or a dimer and forms supercomplexes (SCs) in the inner mitochondrial membrane with NADH-ubiquinone oxidoreductase (complex I, CI) and ubiquinol-cytochrome c oxidoreductase (cytochrome b-c1 complex, complex III, CIII), resulting in different assemblies (supercomplex SCI(1)III(2)IV(1) and megacomplex MCI(2)III(2)IV(2)). Found in a complex with TMEM177, COA6, COX18, COX20, SCO1 and SCO2. Interacts with TMEM177 in a COX20-dependent manner. Interacts with COX20. Interacts with COX16. It depends on Cu cation as a cofactor.

The protein resides in the mitochondrion inner membrane. It carries out the reaction 4 Fe(II)-[cytochrome c] + O2 + 8 H(+)(in) = 4 Fe(III)-[cytochrome c] + 2 H2O + 4 H(+)(out). In terms of biological role, component of the cytochrome c oxidase, the last enzyme in the mitochondrial electron transport chain which drives oxidative phosphorylation. The respiratory chain contains 3 multisubunit complexes succinate dehydrogenase (complex II, CII), ubiquinol-cytochrome c oxidoreductase (cytochrome b-c1 complex, complex III, CIII) and cytochrome c oxidase (complex IV, CIV), that cooperate to transfer electrons derived from NADH and succinate to molecular oxygen, creating an electrochemical gradient over the inner membrane that drives transmembrane transport and the ATP synthase. Cytochrome c oxidase is the component of the respiratory chain that catalyzes the reduction of oxygen to water. Electrons originating from reduced cytochrome c in the intermembrane space (IMS) are transferred via the dinuclear copper A center (CU(A)) of subunit 2 and heme A of subunit 1 to the active site in subunit 1, a binuclear center (BNC) formed by heme A3 and copper B (CU(B)). The BNC reduces molecular oxygen to 2 water molecules using 4 electrons from cytochrome c in the IMS and 4 protons from the mitochondrial matrix. In Galeopterus variegatus (Malayan flying lemur), this protein is Cytochrome c oxidase subunit 2 (MT-CO2).